The following is a 72-amino-acid chain: Translation initiation factor IF-1 (72 aa).

The 72-residue stretch at 1–72 folds into the S1-like domain; the sequence is MTKEDNIEMQ…TKGRIIFRSR (72 aa).

The protein belongs to the IF-1 family. Component of the 30S ribosomal translation pre-initiation complex which assembles on the 30S ribosome in the order IF-2 and IF-3, IF-1 and N-formylmethionyl-tRNA(fMet); mRNA recruitment can occur at any time during PIC assembly.

It localises to the cytoplasm. One of the essential components for the initiation of protein synthesis. Stabilizes the binding of IF-2 and IF-3 on the 30S subunit to which N-formylmethionyl-tRNA(fMet) subsequently binds. Helps modulate mRNA selection, yielding the 30S pre-initiation complex (PIC). Upon addition of the 50S ribosomal subunit IF-1, IF-2 and IF-3 are released leaving the mature 70S translation initiation complex. This chain is Translation initiation factor IF-1, found in Buchnera aphidicola subsp. Schizaphis graminum (strain Sg).